The following is a 327-amino-acid chain: DNA-directed RNA polymerase subunit alpha (327 aa).

Residues 1–231 (MIYQMQMPAK…DHIMYFANFS (231 aa)) are alpha N-terminal domain (alpha-NTD). The alpha C-terminal domain (alpha-CTD) stretch occupies residues 247–327 (DEFESMRKLL…GMDITRYQMK (81 aa)).

The protein belongs to the RNA polymerase alpha chain family. Homodimer. The RNAP catalytic core consists of 2 alpha, 1 beta, 1 beta' and 1 omega subunit. When a sigma factor is associated with the core the holoenzyme is formed, which can initiate transcription.

The catalysed reaction is RNA(n) + a ribonucleoside 5'-triphosphate = RNA(n+1) + diphosphate. DNA-dependent RNA polymerase catalyzes the transcription of DNA into RNA using the four ribonucleoside triphosphates as substrates. This is DNA-directed RNA polymerase subunit alpha from Chlorobium phaeobacteroides (strain DSM 266 / SMG 266 / 2430).